The following is a 106-amino-acid chain: Insulin-like peptide 03 (106 aa).

Positions 1 to 18 (MLFYFGLAVIFLIDSSQT) are cleaved as a signal peptide. The propeptide occupies 19 to 34 (QTLYKVNEVGGSQVDR). 3 cysteine pairs are disulfide-bonded: C37-C93, C49-C106, and C92-C97. Residues 52 to 82 (KKRQNIPRKYGRDPNNILEKEEFAKRFLRVR) constitute a propeptide, c peptide.

The protein belongs to the insulin family.

The protein localises to the secreted. Functionally, insulin decreases blood glucose concentration. May have evolved to activate insulin receptors (INSR) in vertebrates. Molecular docking studies reveals unique interaction with the human insulin receptor. In vivo, insulin-like peptide injection reduces blood glucose levels in two models of zebrafish diabetes (streptozotocin- and glucose-induced). Also shorter swimming distance of zebrafish larvae, an effect which is not observed with human insulin. The protein is Insulin-like peptide 03 of Exaiptasia diaphana (Tropical sea anemone).